The chain runs to 542 residues: Chaperonin GroEL 2 (542 aa).

Residues 30–33, Lys-51, 87–91, Gly-415, and Asp-494 contribute to the ATP site; these read TLGP and DGTTT.

Belongs to the chaperonin (HSP60) family. Forms a cylinder of 14 subunits composed of two heptameric rings stacked back-to-back. Interacts with the co-chaperonin GroES.

The protein localises to the cytoplasm. The catalysed reaction is ATP + H2O + a folded polypeptide = ADP + phosphate + an unfolded polypeptide.. Functionally, together with its co-chaperonin GroES, plays an essential role in assisting protein folding. The GroEL-GroES system forms a nano-cage that allows encapsulation of the non-native substrate proteins and provides a physical environment optimized to promote and accelerate protein folding. In Syntrophobacter fumaroxidans (strain DSM 10017 / MPOB), this protein is Chaperonin GroEL 2.